We begin with the raw amino-acid sequence, 347 residues long: Nicotinate-nucleotide--dimethylbenzimidazole phosphoribosyltransferase (347 aa).

The Proton acceptor role is filled by E316.

It belongs to the CobT family.

It carries out the reaction 5,6-dimethylbenzimidazole + nicotinate beta-D-ribonucleotide = alpha-ribazole 5'-phosphate + nicotinate + H(+). The protein operates within nucleoside biosynthesis; alpha-ribazole biosynthesis; alpha-ribazole from 5,6-dimethylbenzimidazole: step 1/2. Its function is as follows. Catalyzes the synthesis of alpha-ribazole-5'-phosphate from nicotinate mononucleotide (NAMN) and 5,6-dimethylbenzimidazole (DMB). This Vibrio parahaemolyticus serotype O3:K6 (strain RIMD 2210633) protein is Nicotinate-nucleotide--dimethylbenzimidazole phosphoribosyltransferase.